The primary structure comprises 280 residues: Small ribosomal subunit protein uS15m (280 aa).

It belongs to the universal ribosomal protein uS15 family. As to quaternary structure, component of the mitochondrial ribosome small subunit (28S) which comprises a 12S rRNA and about 30 distinct proteins. In terms of tissue distribution, expressed in anterior and posterior midgut primordia in stage 11 embryos. In stage 13 embryos, expression is high in the developing midgut and hindgut. In stage 16 embryos, expression is elevated in the midgut, hindgut, and in a small region that will give rise to pharyngeal muscles and to the stomatogastric nervous system. In larvae, expression is predominant in the gut, and head, presumably in pharyngeal muscles.

The protein resides in the mitochondrion. Essential for gut mitochondrial activity. Might be involved in tissue specific growth factor production. This chain is Small ribosomal subunit protein uS15m (bonsai), found in Drosophila melanogaster (Fruit fly).